Consider the following 917-residue polypeptide: von Willebrand factor A domain-containing protein DDB_G0285975 (917 aa).

Residues 12 to 51 (DTTTTTTPTTPTTPTTPTTTPTTTTTPTTTPTTTTTSTTP) form a disordered region. The segment covering 13 to 51 (TTTTTTPTTPTTPTTPTTTPTTTTTPTTTPTTTTTSTTP) has biased composition (low complexity). One can recognise a VIT domain in the interval 87–215 (RYNTGLKNIS…NVTIHLTIIS (129 aa)). Residues 339-507 (EFIFLIDCSG…NFEEQVMKLV (169 aa)) enclose the VWFA domain. The t-SNARE coiled-coil homology domain occupies 679–741 (LFSSENRNQT…INSIPQKSNI (63 aa)). 2 stretches are compositionally biased toward low complexity: residues 751–760 (SPSEVSTSKS) and 774–818 (NNNN…NNNN). Positions 751–822 (SPSEVSTSKS…NNNNNNSDNS (72 aa)) are disordered.

In Dictyostelium discoideum (Social amoeba), this protein is von Willebrand factor A domain-containing protein DDB_G0285975.